A 1374-amino-acid polypeptide reads, in one-letter code: Tonsoku-like protein (1374 aa).

8 TPR repeats span residues 27-60, 67-100, 107-140, 162-195, 202-235, 242-275, 311-344, and 352-385; these read ASVC…LETT, AVAH…ACAL, QRAW…FEKS, TRIY…AEQN, FRAR…ARVL, SECC…GSQK, MGIC…AELL, and AVIH…QEGN. Residues 460 to 508 form a disordered region; that stretch reads KAAGDEDEGDGEDEEDEEDDDALEATELELSESENEADASPPLEEDEEL. Acidic residues predominate over residues 464–507; it reads DEDEGDGEDEEDEEDDDALEATELELSESENEADASPPLEEDEE. ANK repeat units follow at residues 526-558, 559-591, and 595-627; these read VGET…PRDY, CGWT…DPGG, and DGIT…LRTR. Residues 668 to 777 form a disordered region; the sequence is GRAPHSSQAP…ASDREAATTS (110 aa). Polar residues predominate over residues 672-682; the sequence is HSSQAPQTLPS. Over residues 690–699 the composition is skewed to pro residues; it reads TSPPSSPCPG. Residue Ser-711 is modified to Phosphoserine. Residues 731 to 744 are compositionally biased toward low complexity; sequence SSSSSEGEDSAGPS. At Arg-788 the chain carries Omega-N-methylarginine. Positions 829–908 are disordered; that stretch reads EEDFPMSPGH…PARSPDVPRV (80 aa). 7 LRR repeats span residues 1065 to 1089, 1093 to 1121, 1124 to 1147, 1184 to 1207, 1243 to 1266, 1271 to 1296, and 1327 to 1350; these read HSAL…LLAT, VPGL…LLGQ, LQNL…ALAS, TKCL…PVLG, GCVL…ALSR, CPSL…LLST, and VAQL…ALHQ.

It belongs to the Tonsoku family. In terms of assembly, component of the MMS22L-TONSL complex, a complex at least composed of MMS22L and TONSL/NFKBIL2. Interacts with the MCM complex, the FACT complex and the RPA complex. Interacts with MCM5; the interaction is direct. Binds histones, with a strong preference for histone H3.1 (histones H3.1 and H3-4/H3.1t). Interacts (via ANK repeats) with histone H4; specifically binds histone H4 lacking methylation at 'Lys-20' (H4K20me0). May interact with DNAJC9; the interaction seems to be histone-dependent.

Its subcellular location is the nucleus. It is found in the chromosome. It localises to the cytoplasm. Component of the MMS22L-TONSL complex, a complex that promotes homologous recombination-mediated repair of double-strand breaks (DSBs) at stalled or collapsed replication forks. The MMS22L-TONSL complex is required to maintain genome integrity during DNA replication. It mediates the assembly of RAD51 filaments on single-stranded DNA (ssDNA): the MMS22L-TONSL complex is recruited to DSBs following histone replacement by histone chaperones and eviction of the replication protein A complex (RPA/RP-A) from DSBs. Following recruitment to DSBs, the TONSL-MMS22L complex promotes recruitment of RAD51 filaments and subsequent homologous recombination. Within the complex, TONSL acts as a histone reader, which recognizes and binds newly synthesized histones following their replacement by histone chaperones. Specifically binds histone H4 lacking methylation at 'Lys-20' (H4K20me0) and histone H3.1. The chain is Tonsoku-like protein (TONSL) from Bos taurus (Bovine).